A 594-amino-acid polypeptide reads, in one-letter code: Proteasome-associated ATPase (594 aa).

Over residues 1–10 (MMETPNNDSS) the composition is skewed to polar residues. A disordered region spans residues 1-23 (MMETPNNDSSRTPDEAAGAPDPE). The stretch at 35–86 (ADRQVNILRDKLRHIDRQLAAATQNNSKLVGMLETAKAEILRLKNALDQEGQ) forms a coiled coil. 282 to 287 (GCGKTL) contacts ATP. The docks into pockets in the proteasome alpha-ring stretch occupies residues 593-594 (YL).

The protein belongs to the AAA ATPase family. Homohexamer. Assembles into a hexameric ring structure that caps the 20S proteasome core. Strongly interacts with the prokaryotic ubiquitin-like protein Pup through a hydrophobic interface; the interacting region of ARC lies in its N-terminal coiled-coil domain. There is one Pup binding site per ARC hexamer ring. Upon ATP-binding, the C-terminus of ARC interacts with the alpha-rings of the proteasome core, possibly by binding to the intersubunit pockets.

It functions in the pathway protein degradation; proteasomal Pup-dependent pathway. Functionally, ATPase which is responsible for recognizing, binding, unfolding and translocation of pupylated proteins into the bacterial 20S proteasome core particle. May be essential for opening the gate of the 20S proteasome via an interaction with its C-terminus, thereby allowing substrate entry and access to the site of proteolysis. Thus, the C-termini of the proteasomal ATPase may function like a 'key in a lock' to induce gate opening and therefore regulate proteolysis. The protein is Proteasome-associated ATPase of Arthrobacter sp. (strain FB24).